We begin with the raw amino-acid sequence, 126 residues long: Ribosome-binding factor A (126 aa).

This sequence belongs to the RbfA family. As to quaternary structure, monomer. Binds 30S ribosomal subunits, but not 50S ribosomal subunits or 70S ribosomes.

It is found in the cytoplasm. Its function is as follows. One of several proteins that assist in the late maturation steps of the functional core of the 30S ribosomal subunit. Associates with free 30S ribosomal subunits (but not with 30S subunits that are part of 70S ribosomes or polysomes). Required for efficient processing of 16S rRNA. May interact with the 5'-terminal helix region of 16S rRNA. The chain is Ribosome-binding factor A from Clostridioides difficile (strain 630) (Peptoclostridium difficile).